The chain runs to 277 residues: 3-methyl-2-oxobutanoate hydroxymethyltransferase (277 aa).

2 residues coordinate Mg(2+): aspartate 43 and aspartate 82. Residues 43-44, aspartate 82, and lysine 112 each bind 3-methyl-2-oxobutanoate; that span reads DS. Glutamate 114 contributes to the Mg(2+) binding site. Residue glutamate 181 is the Proton acceptor of the active site.

This sequence belongs to the PanB family. In terms of assembly, homodecamer; pentamer of dimers. Mg(2+) is required as a cofactor.

The protein localises to the cytoplasm. It catalyses the reaction 3-methyl-2-oxobutanoate + (6R)-5,10-methylene-5,6,7,8-tetrahydrofolate + H2O = 2-dehydropantoate + (6S)-5,6,7,8-tetrahydrofolate. It functions in the pathway cofactor biosynthesis; (R)-pantothenate biosynthesis; (R)-pantoate from 3-methyl-2-oxobutanoate: step 1/2. Catalyzes the reversible reaction in which hydroxymethyl group from 5,10-methylenetetrahydrofolate is transferred onto alpha-ketoisovalerate to form ketopantoate. The sequence is that of 3-methyl-2-oxobutanoate hydroxymethyltransferase from Listeria monocytogenes serovar 1/2a (strain ATCC BAA-679 / EGD-e).